A 280-amino-acid polypeptide reads, in one-letter code: uncharacterized protein (280 aa).

Disordered stretches follow at residues 20-41, 170-199, and 251-280; these read DVKK…QQQQ, INSP…KDKA, and GNSK…SFSF. Low complexity predominate over residues 25–41; the sequence is QQQQQQQPQAPPQQQQQ. The segment covering 178-199 has biased composition (basic and acidic residues); that stretch reads EEEKPQLSKKEEPEWLKGKDKA.

This is an uncharacterized protein from Dictyostelium discoideum (Social amoeba).